Consider the following 318-residue polypeptide: L-lactate dehydrogenase (318 aa).

Residues Val17, Asp38, Lys43, Tyr69, and 83–84 (GA) each bind NAD(+). Substrate-binding residues include Gln86 and Arg92. Residues Ser105, 122 to 124 (ATN), and Ser147 contribute to the NAD(+) site. Residue 124 to 127 (NPVD) coordinates substrate. 152-155 (DTAR) is a substrate binding site. Beta-D-fructose 1,6-bisphosphate-binding residues include Lys157 and His172. His179 acts as the Proton acceptor in catalysis. Tyr223 carries the post-translational modification Phosphotyrosine. A substrate-binding site is contributed by Thr232.

Belongs to the LDH/MDH superfamily. LDH family. In terms of assembly, homotetramer.

The protein localises to the cytoplasm. The catalysed reaction is (S)-lactate + NAD(+) = pyruvate + NADH + H(+). It functions in the pathway fermentation; pyruvate fermentation to lactate; (S)-lactate from pyruvate: step 1/1. With respect to regulation, allosterically activated by fructose 1,6-bisphosphate (FBP). In terms of biological role, catalyzes the conversion of lactate to pyruvate. The chain is L-lactate dehydrogenase from Staphylococcus saprophyticus subsp. saprophyticus (strain ATCC 15305 / DSM 20229 / NCIMB 8711 / NCTC 7292 / S-41).